Reading from the N-terminus, the 921-residue chain is Isoleucine--tRNA ligase (921 aa).

Positions 57–67 (PYANGDIHMGH) match the 'HIGH' region motif. E552 contributes to the L-isoleucyl-5'-AMP binding site. The 'KMSKS' region motif lies at 593 to 597 (KMSKS). K596 is a binding site for ATP. Zn(2+) contacts are provided by C888, C891, C908, and C911.

It belongs to the class-I aminoacyl-tRNA synthetase family. IleS type 1 subfamily. Monomer. Zn(2+) is required as a cofactor.

It localises to the cytoplasm. It carries out the reaction tRNA(Ile) + L-isoleucine + ATP = L-isoleucyl-tRNA(Ile) + AMP + diphosphate. Its function is as follows. Catalyzes the attachment of isoleucine to tRNA(Ile). As IleRS can inadvertently accommodate and process structurally similar amino acids such as valine, to avoid such errors it has two additional distinct tRNA(Ile)-dependent editing activities. One activity is designated as 'pretransfer' editing and involves the hydrolysis of activated Val-AMP. The other activity is designated 'posttransfer' editing and involves deacylation of mischarged Val-tRNA(Ile). The protein is Isoleucine--tRNA ligase of Bacillus cereus (strain G9842).